Consider the following 750-residue polypeptide: Cullin-5 (750 aa).

Positions 678–739 constitute a Cullin neddylation domain; the sequence is RFFKLQAAIV…QEYIRRTTDD (62 aa). K691 participates in a covalent cross-link: Glycyl lysine isopeptide (Lys-Gly) (interchain with G-Cter in NEDD8).

It belongs to the cullin family. Neddylated; which enhances the ubiquitination activity of SCF-like complex.

It functions in the pathway protein modification; protein ubiquitination. Functionally, probable core component of cullin-based SCF-like E3 ubiquitin-protein ligase complexes which mediate the ubiquitination and subsequent proteasomal degradation of target proteins. The E3 ubiquitin-protein ligase activity of the complex is dependent on the neddylation of the cullin subunit. This chain is Cullin-5 (culE), found in Dictyostelium discoideum (Social amoeba).